The primary structure comprises 288 residues: MGDNALDLATASSTPIPMPNTGQLVISPQDIGYSDPPKLRGRLKLEFVHDISLDANVEDPIALIPHGIWSIFKSKLAQMRCPKGYITYDKVILSWKPHVATGLARGQIAVVDTRVNHTSIEDLMHKALWKTAPVDLGCTYTIQGTVPYCLPFHPKEGGDVKSDLESQNPIRGIVYITDSRYQEAARHGALTMTLKLSIGTMPTDALTGPRATLSQPHLRDNLRSRSQRISRPPIGITQRPRRSLAEPPLEKEEEQESTLSSEASGSEQGLIIPVQGPSTSSRSRRVRG.

Positions Thr-207–Gly-288 are disordered.

In terms of biological role, transports viral genome to neighboring plant cells directly through plasmosdesmata, without any budding. The movement protein allows efficient cell to cell propagation, by bypassing the host cell wall barrier (Potential). The polypeptide is Putative movement protein (Cucumis melo (Muskmelon)).